A 228-amino-acid polypeptide reads, in one-letter code: Sec-independent protein translocase protein TatB (228 aa).

A helical transmembrane segment spans residues 1–21 (MFDFGLGELIFVGIIALIVLG). Disordered regions lie at residues 106–164 (TPAD…TDKD) and 196–228 (VPHT…VRKS). A compositionally biased stretch (basic and acidic residues) spans 135–151 (PSERSDTSAETLGDDRQ). Over residues 206–228 (AINRKRDFRPKHRAKPKLRVRKS) the composition is skewed to basic residues.

This sequence belongs to the TatB family. As to quaternary structure, the Tat system comprises two distinct complexes: a TatABC complex, containing multiple copies of TatA, TatB and TatC subunits, and a separate TatA complex, containing only TatA subunits. Substrates initially bind to the TatABC complex, which probably triggers association of the separate TatA complex to form the active translocon.

Its subcellular location is the cell inner membrane. Part of the twin-arginine translocation (Tat) system that transports large folded proteins containing a characteristic twin-arginine motif in their signal peptide across membranes. Together with TatC, TatB is part of a receptor directly interacting with Tat signal peptides. TatB may form an oligomeric binding site that transiently accommodates folded Tat precursor proteins before their translocation. The sequence is that of Sec-independent protein translocase protein TatB from Neisseria gonorrhoeae (strain ATCC 700825 / FA 1090).